A 344-amino-acid chain; its full sequence is Cyanuric acid amidohydrolase (344 aa).

Residues 1–91 (MTVVDIVKRT…ASAFVGTDRP (91 aa)) form an RU A region. Substrate is bound by residues R51 and 71-72 (SG). Residues 97–232 (ALVAAVGRTA…CHILVLGNSP (136 aa)) form an RU B region. Residue K146 is part of the active site. Residues R178 and 215–216 (SS) contribute to the substrate site. The active-site Nucleophile is the S215. The segment at 238 to 344 (LRAVHGVMRD…PVTVVYRVAS (107 aa)) is RU C. E276 contacts Mg(2+). Substrate is bound by residues R303 and 322 to 323 (SG). Mg(2+) contacts are provided by A325, Q328, G329, P330, and G333.

It belongs to the cyclic amide hydrolase (CyAH) family. In terms of assembly, homotetramer.

It carries out the reaction cyanurate + H2O = 1-carboxybiuret + H(+). Its pathway is xenobiotic degradation; atrazine degradation; biuret from cyanurate: step 1/1. With respect to regulation, inhibited by barbituric acid. Functionally, responsible for the hydrolysis of cyanuric acid, an intermediate formed during catabolism of s-triazine based compounds in herbicides such as atrazine and polymers such as melamine. Catalyzes the hydrolytic opening of the s-triazine ring of cyanuric acid (2,4,6-trihydroxy-s-triazine) to yield carbon dioxide and carboxybiuret, which spontaneously decarboxylates to biuret. This is Cyanuric acid amidohydrolase from Pseudonocardia dioxanivorans (strain ATCC 55486 / DSM 44775 / JCM 13855 / CB1190).